The chain runs to 1175 residues: Atrophin-1 (1175 aa).

Disordered stretches follow at residues 1-595 (MKTR…VTTS), 608-752 (SSPA…ARFN), and 770-847 (VPLE…HRPP). Positions 16–32 (RKKEAPGPREELRSRGR) match the Nuclear localization signal motif. Residues 17–29 (KKEAPGPREELRS) show a composition bias toward basic and acidic residues. A Phosphoserine modification is found at serine 34. Residues 45–63 (GKAEKSRQTAKKARIEEPS) are compositionally biased toward basic and acidic residues. 5 positions are modified to phosphoserine: serine 77, serine 79, serine 101, serine 103, and serine 107. Positions 108–128 (LDGRSINDDGSSDPRDIDQDN) are enriched in basic and acidic residues. Residues 129 to 152 (RSTSPSIYSPGSVENDSDSSSGLS) are compositionally biased toward polar residues. 2 stretches are compositionally biased toward pro residues: residues 158–174 (PYHP…PPDS) and 208–217 (GPPPGAPPTH). Low complexity-rich tracts occupy residues 240–253 (GAAA…SGGK) and 262–273 (IPISSSGASGAP). Pro residues predominate over residues 345-374 (PPGPEKGPTLAPSPHPLPPASSSAPGPPMR). A compositionally biased stretch (low complexity) spans 378-396 (SSSSSSAAASSSSSSSSAS). Polar residues predominate over residues 416 to 437 (SMSVSNQPPKYTQPSLPSQAVW). Over residues 476 to 491 (THHHHQQQPQQQHHHG) the composition is skewed to basic residues. Positions 503–553 (HPLESSNSHHAHPYNMSPSLGSLRPYPPGPAHLPPPHGQVSYNQAGPNGPP) are involved in binding BAIAP2. The segment covering 527 to 539 (PYPPGPAHLPPPH) has biased composition (pro residues). Positions 547 to 584 (AGPNGPPVSSSNSSGSSSQASYSCSHPSSSQGPQGASY) are enriched in low complexity. Serine 617 is subject to Phosphoserine. Position 626 is an N6-acetyllysine (lysine 626). Threonine 638 bears the Phosphothreonine mark. Serine 646 carries the post-translational modification Phosphoserine. Threonine 654 carries the phosphothreonine modification. Composition is skewed to pro residues over residues 693–703 (LPPPPAAPTTG) and 722–737 (PESP…PPPK). A Phosphoserine; by MAPK8 modification is found at serine 724. A phosphoserine mark is found at serine 731 and serine 733. Positions 780-824 (KRADLVEKVRREAEQRAREEKEREREREREKEREREKERELERSV) are enriched in basic and acidic residues. Residues 864-879 (DTPALRTLSEYARPHV) are required for interaction with FAT1. Position 881 is a phosphoserine (serine 881). The disordered stretch occupies residues 913–932 (PAAREREREARERDLRDRLK). Residues 914-932 (AAREREREARERDLRDRLK) show a composition bias toward basic and acidic residues. A Nuclear export signal motif is present at residues 1018–1026 (ALGNDPLAR). Residue arginine 1100 is modified to Asymmetric dimethylarginine. Lysine 1168 participates in a covalent cross-link: Glycyl lysine isopeptide (Lys-Gly) (interchain with G-Cter in SUMO2).

In terms of assembly, interacts with BAIAP2, WWP1, WWP2, WWP3 and RERE. Interacts (via its N-terminus) with MTG8; the interaction enhances transcriptional repression of MTG8. Interacts with PQBP1. Interacts with NR2E1; the interaction represses the transcriptional activity of NR2E1. Interacts with FAT1 (via a C-terminal domain). Post-translationally, phosphorylated in vitro by MAPK8/JNK1 on Ser-724. Widely expressed. Most abundant in the brain.

It is found in the cytoplasm. The protein localises to the perinuclear region. The protein resides in the cell junction. Its subcellular location is the nucleus. In terms of biological role, transcriptional corepressor. Corepressor of MTG8 transcriptional repression. Has some intrinsic repression activity which is independent of the number of the poly-Q repeats. Recruits NR2E1 to repress transcription. Promotes vascular smooth cell (VSMC) migration and orientation. The protein is Atrophin-1 (Atn1) of Mus musculus (Mouse).